Consider the following 456-residue polypeptide: Enolase (456 aa).

A (2R)-2-phosphoglycerate-binding site is contributed by Gln164. The active-site Proton donor is the Glu207. Residues Asp244, Glu287, and Asp314 each contribute to the Mg(2+) site. (2R)-2-phosphoglycerate contacts are provided by Lys339, Arg368, Ser369, and Lys390. Lys339 functions as the Proton acceptor in the catalytic mechanism.

The protein belongs to the enolase family. In terms of assembly, component of the RNA degradosome, a multiprotein complex involved in RNA processing and mRNA degradation. The cofactor is Mg(2+).

The protein resides in the cytoplasm. It is found in the secreted. The protein localises to the cell surface. It carries out the reaction (2R)-2-phosphoglycerate = phosphoenolpyruvate + H2O. Its pathway is carbohydrate degradation; glycolysis; pyruvate from D-glyceraldehyde 3-phosphate: step 4/5. Its function is as follows. Catalyzes the reversible conversion of 2-phosphoglycerate (2-PG) into phosphoenolpyruvate (PEP). It is essential for the degradation of carbohydrates via glycolysis. The sequence is that of Enolase from Francisella tularensis subsp. novicida (strain U112).